The sequence spans 501 residues: ATP synthase subunit alpha (501 aa).

169 to 176 (GDRQTGKT) contributes to the ATP binding site.

It belongs to the ATPase alpha/beta chains family. In terms of assembly, F-type ATPases have 2 components, CF(1) - the catalytic core - and CF(0) - the membrane proton channel. CF(1) has five subunits: alpha(3), beta(3), gamma(1), delta(1), epsilon(1). CF(0) has three main subunits: a(1), b(2) and c(9-12). The alpha and beta chains form an alternating ring which encloses part of the gamma chain. CF(1) is attached to CF(0) by a central stalk formed by the gamma and epsilon chains, while a peripheral stalk is formed by the delta and b chains.

It localises to the cell membrane. It carries out the reaction ATP + H2O + 4 H(+)(in) = ADP + phosphate + 5 H(+)(out). Its function is as follows. Produces ATP from ADP in the presence of a proton gradient across the membrane. The alpha chain is a regulatory subunit. This is ATP synthase subunit alpha from Streptococcus agalactiae serotype Ia (strain ATCC 27591 / A909 / CDC SS700).